We begin with the raw amino-acid sequence, 286 residues long: Elongation factor Ts (286 aa).

An involved in Mg(2+) ion dislocation from EF-Tu region spans residues 82-85 (TDFV).

The protein belongs to the EF-Ts family.

It localises to the cytoplasm. Functionally, associates with the EF-Tu.GDP complex and induces the exchange of GDP to GTP. It remains bound to the aminoacyl-tRNA.EF-Tu.GTP complex up to the GTP hydrolysis stage on the ribosome. This chain is Elongation factor Ts, found in Hamiltonella defensa subsp. Acyrthosiphon pisum (strain 5AT).